Here is a 499-residue protein sequence, read N- to C-terminus: Probable cytosol aminopeptidase (499 aa).

The Mn(2+) site is built by K271 and D276. K283 is a catalytic residue. Mn(2+) is bound by residues D294, D353, and E355. R357 is an active-site residue.

The protein belongs to the peptidase M17 family. Requires Mn(2+) as cofactor.

Its subcellular location is the cytoplasm. It carries out the reaction Release of an N-terminal amino acid, Xaa-|-Yaa-, in which Xaa is preferably Leu, but may be other amino acids including Pro although not Arg or Lys, and Yaa may be Pro. Amino acid amides and methyl esters are also readily hydrolyzed, but rates on arylamides are exceedingly low.. The enzyme catalyses Release of an N-terminal amino acid, preferentially leucine, but not glutamic or aspartic acids.. In terms of biological role, presumably involved in the processing and regular turnover of intracellular proteins. Catalyzes the removal of unsubstituted N-terminal amino acids from various peptides. The sequence is that of Probable cytosol aminopeptidase from Bordetella bronchiseptica (strain ATCC BAA-588 / NCTC 13252 / RB50) (Alcaligenes bronchisepticus).